The chain runs to 151 residues: Large ribosomal subunit protein bL9 (151 aa).

It belongs to the bacterial ribosomal protein bL9 family.

Its function is as follows. Binds to the 23S rRNA. This Chlorobium phaeovibrioides (strain DSM 265 / 1930) (Prosthecochloris vibrioformis (strain DSM 265)) protein is Large ribosomal subunit protein bL9.